A 402-amino-acid polypeptide reads, in one-letter code: Sex hormone-binding globulin (402 aa).

Positions methionine 1 to alanine 29 are cleaved as a signal peptide. Threonine 36 carries O-linked (GalNAc...) threonine glycosylation. 2 Laminin G-like domains span residues valine 45–cysteine 217 and glycine 224–cysteine 390. 2 disulfide bridges follow: cysteine 193–cysteine 217 and cysteine 362–cysteine 390. N-linked (GlcNAc...) asparagine glycans are attached at residues asparagine 380 and asparagine 396.

As to quaternary structure, homodimer. Variant Asn-356 contains one N-linked (GlcNAc...) at position 356. As to expression, isoform 1 and isoform 2 are present in liver and testis.

Its subcellular location is the secreted. Functionally, functions as an androgen transport protein, but may also be involved in receptor mediated processes. Each dimer binds one molecule of steroid. Specific for 5-alpha-dihydrotestosterone, testosterone, and 17-beta-estradiol. Regulates the plasma metabolic clearance rate of steroid hormones by controlling their plasma concentration. In Homo sapiens (Human), this protein is Sex hormone-binding globulin.